A 373-amino-acid chain; its full sequence is uncharacterized protein (373 aa).

This is an uncharacterized protein from Saccharomyces cerevisiae (strain ATCC 204508 / S288c) (Baker's yeast).